Consider the following 504-residue polypeptide: UDP-N-acetylmuramoylalanine--D-glutamate ligase (504 aa).

129 to 135 (GTNGKTT) contributes to the ATP binding site.

Belongs to the MurCDEF family.

The protein localises to the cytoplasm. The catalysed reaction is UDP-N-acetyl-alpha-D-muramoyl-L-alanine + D-glutamate + ATP = UDP-N-acetyl-alpha-D-muramoyl-L-alanyl-D-glutamate + ADP + phosphate + H(+). The protein operates within cell wall biogenesis; peptidoglycan biosynthesis. Cell wall formation. Catalyzes the addition of glutamate to the nucleotide precursor UDP-N-acetylmuramoyl-L-alanine (UMA). In Burkholderia mallei (strain ATCC 23344), this protein is UDP-N-acetylmuramoylalanine--D-glutamate ligase.